The following is a 318-amino-acid chain: Isoflavone reductase (318 aa).

NADP(+) contacts are provided by residues 11–17 (GPTGAIG), Arg36, and Lys44. Lys144 functions as the Proton acceptor in the catalytic mechanism. Residue Arg148 participates in NADP(+) binding.

The protein belongs to the NmrA-type oxidoreductase family. Isoflavone reductase subfamily.

The enzyme catalyses (3R)-vestitone + NADP(+) = 2'-hydroxyformononetin + NADPH + 2 H(+). It participates in phytoalexin biosynthesis; pterocarpan phytoalexin biosynthesis. Functionally, reduces achiral isoflavones to chiral isoflavanones during the biosynthesis of chiral pterocarpan phytoalexins. This is Isoflavone reductase (IFR) from Cicer arietinum (Chickpea).